We begin with the raw amino-acid sequence, 581 residues long: Adenine deaminase (581 aa).

Belongs to the metallo-dependent hydrolases superfamily. Adenine deaminase family. The cofactor is Mn(2+).

The catalysed reaction is adenine + H2O + H(+) = hypoxanthine + NH4(+). The chain is Adenine deaminase from Brucella suis biovar 1 (strain 1330).